We begin with the raw amino-acid sequence, 427 residues long: Vitamin D3 receptor (427 aa).

A DNA-binding region (nuclear receptor) is located at residues 21 to 96 (PRICGVCGDR…IGMMKEFILT (76 aa)). 8 residues coordinate Zn(2+): cysteine 24, cysteine 27, cysteine 41, cysteine 44, cysteine 60, cysteine 66, cysteine 76, and cysteine 79. 2 consecutive NR C4-type zinc fingers follow at residues 24-44 (CGVC…CEGC) and 60-84 (CPFN…LKRC). Positions 97–126 (DEEVQRKREMILKRKEEEALKDSLRPKLSE) are hinge. An NR LBD domain is found at 127–423 (EQQRIIAILL…LTPLVLEVFG (297 aa)). Tyrosine 143 lines the calcitriol pocket. Residues 158–183 (RVNDGGGSHPSRPNSRHTPSFSGDSS) are disordered. Residue serine 237 coordinates calcitriol. The interaction with coactivator LXXLL motif stretch occupies residues 246-264 (KMIPGFRDLTSEDQIVLLK). Calcitriol is bound by residues arginine 274, serine 278, histidine 305, and histidine 397. A 9aaTAD motif is present at residues 416–424 (PLVLEVFGN).

It belongs to the nuclear hormone receptor family. NR1 subfamily. In terms of assembly, homodimer in the absence of bound vitamin D3. Heterodimer with RXRA after vitamin D3 binding. Interacts with MED1, NCOA1, NCOA2, NCOA3 and NCOA6 coactivators, leading to a strong increase of transcription of target genes. Interacts with the corepressor NCOR1. Interacts with SNW1. Interacts with IRX4, the interaction does not affect its transactivation activity. Post-translationally, ubiquitinated by UBR5, leading to its degradation: UBR5 specifically recognizes and binds ligand-bound VDR when it is not associated with coactivators (NCOAs). In presence of NCOAs, the UBR5-degron is not accessible, preventing its ubiquitination and degradation.

Its subcellular location is the nucleus. The protein localises to the cytoplasm. Its function is as follows. Nuclear receptor for calcitriol, the active form of vitamin D3 which mediates the action of this vitamin on cells. Enters the nucleus upon vitamin D3 binding where it forms heterodimers with the retinoid X receptor/RXR. The VDR-RXR heterodimers bind to specific response elements on DNA and activate the transcription of vitamin D3-responsive target genes. Plays a central role in calcium homeostasis. This Saguinus oedipus (Cotton-top tamarin) protein is Vitamin D3 receptor (VDR).